The chain runs to 424 residues: Glutamyl-tRNA reductase (424 aa).

Residues 49-52 (TCNR), Ser105, 110-112 (EPQ), and Gln116 contribute to the substrate site. Cys50 (nucleophile) is an active-site residue. Position 185-190 (185-190 (GSGETA)) interacts with NADP(+).

It belongs to the glutamyl-tRNA reductase family. Homodimer.

The catalysed reaction is (S)-4-amino-5-oxopentanoate + tRNA(Glu) + NADP(+) = L-glutamyl-tRNA(Glu) + NADPH + H(+). It functions in the pathway porphyrin-containing compound metabolism; protoporphyrin-IX biosynthesis; 5-aminolevulinate from L-glutamyl-tRNA(Glu): step 1/2. Catalyzes the NADPH-dependent reduction of glutamyl-tRNA(Glu) to glutamate 1-semialdehyde (GSA). This is Glutamyl-tRNA reductase from Legionella pneumophila (strain Paris).